Here is a 286-residue protein sequence, read N- to C-terminus: Protease HtpX homolog (286 aa).

A run of 2 helical transmembrane segments spans residues 6–26 (TCFLMVVLMLLFVFVGGYVGG) and 28–48 (QGMIIAFLVALGMNFFSYFFS). His130 is a Zn(2+) binding site. The active site involves Glu131. His134 is a Zn(2+) binding site. A run of 2 helical transmembrane segments spans residues 140 to 160 (ILTGSIAAVMAGAIAMLANFA) and 178 to 198 (AIMLIIALIMPLAATIIQMAI). Glu203 is a Zn(2+) binding site.

Belongs to the peptidase M48B family. Zn(2+) serves as cofactor.

Its subcellular location is the cell inner membrane. The sequence is that of Protease HtpX homolog from Campylobacter curvus (strain 525.92).